Reading from the N-terminus, the 80-residue chain is ATP synthase subunit c (80 aa).

A run of 2 helical transmembrane segments spans residues 8–28 (MIYFAAAIMLGMAAVGAAIGI) and 55–75 (IVMGLVDAIPMIVVGMALYLI).

Belongs to the ATPase C chain family. F-type ATPases have 2 components, F(1) - the catalytic core - and F(0) - the membrane proton channel. F(1) has five subunits: alpha(3), beta(3), gamma(1), delta(1), epsilon(1). F(0) has three main subunits: a(1), b(2) and c(10-14). The alpha and beta chains form an alternating ring which encloses part of the gamma chain. F(1) is attached to F(0) by a central stalk formed by the gamma and epsilon chains, while a peripheral stalk is formed by the delta and b chains.

Its subcellular location is the cell inner membrane. In terms of biological role, f(1)F(0) ATP synthase produces ATP from ADP in the presence of a proton or sodium gradient. F-type ATPases consist of two structural domains, F(1) containing the extramembraneous catalytic core and F(0) containing the membrane proton channel, linked together by a central stalk and a peripheral stalk. During catalysis, ATP synthesis in the catalytic domain of F(1) is coupled via a rotary mechanism of the central stalk subunits to proton translocation. Its function is as follows. Key component of the F(0) channel; it plays a direct role in translocation across the membrane. A homomeric c-ring of between 10-14 subunits forms the central stalk rotor element with the F(1) delta and epsilon subunits. This chain is ATP synthase subunit c, found in Aeromonas salmonicida (strain A449).